A 425-amino-acid chain; its full sequence is Oxalate decarboxylase ARB_02208 (425 aa).

A signal peptide spans 1–19 (MKFGSALVAAVAAVAGVAA). The 164-residue stretch at 73-236 (FSLSKTRMFH…FNISTGGTFD (164 aa)) folds into the Cupin type-1 1 domain. Residues histidine 116, histidine 118, glutamate 122, and histidine 161 each coordinate Mn(2+). N-linked (GlcNAc...) asparagine glycans are attached at residues asparagine 228, asparagine 247, asparagine 254, and asparagine 265. Residues 270–414 (FHIRDAPEIQ…AINVPIDVID (145 aa)) form the Cupin type-1 2 domain. Residues histidine 317, histidine 319, glutamate 324, and histidine 363 each coordinate Mn(2+). An N-linked (GlcNAc...) asparagine glycan is attached at asparagine 367. Glutamate 378 functions as the Proton donor in the catalytic mechanism.

It depends on Mn(2+) as a cofactor.

It is found in the secreted. The catalysed reaction is oxalate + H(+) = formate + CO2. Functionally, converts oxalate to formate and CO(2) in an O(2)-dependent reaction. Can also catalyze minor side reactions: oxalate oxidation to produce H(2)O(2), and oxalate-dependent, H(2)O(2)-independent dye oxidations. In Arthroderma benhamiae (strain ATCC MYA-4681 / CBS 112371) (Trichophyton mentagrophytes), this protein is Oxalate decarboxylase ARB_02208.